A 158-amino-acid polypeptide reads, in one-letter code: Sporulation-delaying protein SdpA (158 aa).

Its subcellular location is the cytoplasm. Functionally, required for the maturation of SdpC to SDP. Not required for SdpC signal peptide cleavage, secretion from the cell or disulfide bond formation. The polypeptide is Sporulation-delaying protein SdpA (Bacillus subtilis (strain 168)).